The chain runs to 237 residues: Riboflavin kinase (237 aa).

The segment at 1 to 101 (MRLKIKAIWV…SRIFSSEPDV (101 aa)) is unknown. A riboflavin kinase region spans residues 102-237 (LELEGNVLKG…VKKQGMEGQK (136 aa)). 111-116 (GLGEGQ) contributes to the CDP binding site. Positions 140 and 142 each coordinate Mg(2+). 2 residues coordinate FMN: Thr-197 and Glu-205. 210 to 213 (VKLR) lines the CDP pocket.

It belongs to the archaeal riboflavin kinase family. The cofactor is Mg(2+).

It catalyses the reaction riboflavin + CTP = CDP + FMN + H(+). It functions in the pathway cofactor biosynthesis; FMN biosynthesis; FMN from riboflavin (CTP route): step 1/1. In terms of biological role, catalyzes the CTP-dependent phosphorylation of riboflavin (vitamin B2) to form flavin mononucleotide (FMN). The sequence is that of Riboflavin kinase (ribK) from Methanosarcina acetivorans (strain ATCC 35395 / DSM 2834 / JCM 12185 / C2A).